The primary structure comprises 436 residues: UPF0597 protein YhaM (436 aa).

Belongs to the UPF0597 family.

The polypeptide is UPF0597 protein YhaM (Escherichia coli O7:K1 (strain IAI39 / ExPEC)).